A 130-amino-acid chain; its full sequence is Small ribosomal subunit protein uS11 (130 aa).

Belongs to the universal ribosomal protein uS11 family. In terms of assembly, part of the 30S ribosomal subunit. Interacts with proteins S7 and S18. Binds to IF-3.

Its function is as follows. Located on the platform of the 30S subunit, it bridges several disparate RNA helices of the 16S rRNA. Forms part of the Shine-Dalgarno cleft in the 70S ribosome. This chain is Small ribosomal subunit protein uS11, found in Kosmotoga olearia (strain ATCC BAA-1733 / DSM 21960 / TBF 19.5.1).